The following is a 298-amino-acid chain: Ethanolamine ammonia-lyase small subunit (298 aa).

The adenosylcob(III)alamin site is built by Val210, Glu231, and Cys261.

This sequence belongs to the EutC family. In terms of assembly, the basic unit is a heterodimer which dimerizes to form tetramers. The heterotetramers trimerize; 6 large subunits form a core ring with 6 small subunits projecting outwards. The cofactor is adenosylcob(III)alamin.

Its subcellular location is the bacterial microcompartment. The enzyme catalyses ethanolamine = acetaldehyde + NH4(+). The protein operates within amine and polyamine degradation; ethanolamine degradation. Catalyzes the deamination of various vicinal amino-alcohols to oxo compounds. Allows this organism to utilize ethanolamine as the sole source of nitrogen and carbon in the presence of external vitamin B12. The protein is Ethanolamine ammonia-lyase small subunit of Salmonella schwarzengrund (strain CVM19633).